Here is a 328-residue protein sequence, read N- to C-terminus: Putative potassium channel protein YugO (328 aa).

Transmembrane regions (helical) follow at residues 19–39, 42–62, and 73–93; these read IGVI…ILEP, FTSV…VGYG, and AAGI…FATL. One can recognise an RCK N-terminal domain in the interval 114 to 238; the sequence is RDHIILIGWN…ERAGANQIIG (125 aa).

Its subcellular location is the cell membrane. The chain is Putative potassium channel protein YugO (yugO) from Bacillus subtilis (strain 168).